Here is a 460-residue protein sequence, read N- to C-terminus: Kynurenine 3-monooxygenase (460 aa).

FAD is bound by residues V13, 32-34 (DFR), and A53. Residues R83 and Y97 each coordinate L-kynurenine. FAD-binding positions include R109, L133, Y195, D314, and 325 to 328 (QGMN). L-kynurenine is bound by residues N373 and Y408.

This sequence belongs to the aromatic-ring hydroxylase family. KMO subfamily. FAD is required as a cofactor.

It is found in the mitochondrion outer membrane. The enzyme catalyses L-kynurenine + NADPH + O2 + H(+) = 3-hydroxy-L-kynurenine + NADP(+) + H2O. Its pathway is cofactor biosynthesis; NAD(+) biosynthesis; quinolinate from L-kynurenine: step 1/3. Its function is as follows. Catalyzes the hydroxylation of L-kynurenine (L-Kyn) to form 3-hydroxy-L-kynurenine (L-3OHKyn). Required for synthesis of quinolinic acid. In Saccharomyces cerevisiae (strain ATCC 204508 / S288c) (Baker's yeast), this protein is Kynurenine 3-monooxygenase.